The primary structure comprises 71 residues: uncharacterized protein (71 aa).

This is an uncharacterized protein from Cassava vein mosaic virus (CsVMV).